Here is a 238-residue protein sequence, read N- to C-terminus: 4-hydroxy-tetrahydrodipicolinate reductase (238 aa).

12-17 (GASGRM) lines the NAD(+) pocket. Residue Arg40 participates in NADP(+) binding. NAD(+) is bound by residues 93–95 (GTT) and 117–120 (ASNF). His149 functions as the Proton donor/acceptor in the catalytic mechanism. His150 provides a ligand contact to (S)-2,3,4,5-tetrahydrodipicolinate. Residue Lys153 is the Proton donor of the active site. 159 to 160 (GT) provides a ligand contact to (S)-2,3,4,5-tetrahydrodipicolinate.

The protein belongs to the DapB family.

Its subcellular location is the cytoplasm. It carries out the reaction (S)-2,3,4,5-tetrahydrodipicolinate + NAD(+) + H2O = (2S,4S)-4-hydroxy-2,3,4,5-tetrahydrodipicolinate + NADH + H(+). It catalyses the reaction (S)-2,3,4,5-tetrahydrodipicolinate + NADP(+) + H2O = (2S,4S)-4-hydroxy-2,3,4,5-tetrahydrodipicolinate + NADPH + H(+). Its pathway is amino-acid biosynthesis; L-lysine biosynthesis via DAP pathway; (S)-tetrahydrodipicolinate from L-aspartate: step 4/4. Its function is as follows. Catalyzes the conversion of 4-hydroxy-tetrahydrodipicolinate (HTPA) to tetrahydrodipicolinate. This chain is 4-hydroxy-tetrahydrodipicolinate reductase, found in Xanthomonas campestris pv. campestris (strain 8004).